A 279-amino-acid polypeptide reads, in one-letter code: Dermonecrotic toxin LbSicTox-alphaIB1a (279 aa).

Residue His11 is part of the active site. The Mg(2+) site is built by Glu31 and Asp33. The active-site Nucleophile is His47. Disulfide bonds link Cys51–Cys57 and Cys53–Cys196. Asp91 serves as a coordination point for Mg(2+).

The protein belongs to the arthropod phospholipase D family. Class II subfamily. Class IIa sub-subfamily. Mg(2+) is required as a cofactor. In terms of tissue distribution, expressed by the venom gland.

It localises to the secreted. The enzyme catalyses an N-(acyl)-sphingosylphosphocholine = an N-(acyl)-sphingosyl-1,3-cyclic phosphate + choline. The catalysed reaction is an N-(acyl)-sphingosylphosphoethanolamine = an N-(acyl)-sphingosyl-1,3-cyclic phosphate + ethanolamine. It catalyses the reaction a 1-acyl-sn-glycero-3-phosphocholine = a 1-acyl-sn-glycero-2,3-cyclic phosphate + choline. It carries out the reaction a 1-acyl-sn-glycero-3-phosphoethanolamine = a 1-acyl-sn-glycero-2,3-cyclic phosphate + ethanolamine. In terms of biological role, dermonecrotic toxins cleave the phosphodiester linkage between the phosphate and headgroup of certain phospholipids (sphingolipid and lysolipid substrates), forming an alcohol (often choline) and a cyclic phosphate. This toxin acts on sphingomyelin (SM) with high activity (about 30.5-31.5 U/mg). It may also act on ceramide phosphoethanolamine (CPE), lysophosphatidylcholine (LPC) and lysophosphatidylethanolamine (LPE), but not on lysophosphatidylserine (LPS), and lysophosphatidylglycerol (LPG). It acts by transphosphatidylation, releasing exclusively cyclic phosphate products as second products. Induces dermonecrosis, hemolysis, increased vascular permeability, edema, inflammatory response, and platelet aggregation. Is lethal to mice. This Loxosceles boneti (North American fiddleback spider) protein is Dermonecrotic toxin LbSicTox-alphaIB1a.